A 695-amino-acid polypeptide reads, in one-letter code: Protein ACTIVITY OF BC1 COMPLEX KINASE 7, chloroplastic (695 aa).

In terms of domain architecture, Protein kinase spans 259–589; sequence EFEEQPIAAA…VQEIRKQADD (331 aa). Residues 265–273 and Lys287 contribute to the ATP site; that span reads IAAASLGQV. Asp421 acts as the Proton acceptor in catalysis. 2 helical membrane-spanning segments follow: residues 633–653 and 659–679; these read TILQ…NIGV and GSQL…LLVL.

Belongs to the protein kinase superfamily. ADCK protein kinase family. In terms of tissue distribution, mostly expressed in leaves and flowers, and, to a lower extent, in roots.

The protein localises to the plastid. The protein resides in the chloroplast thylakoid membrane. It localises to the chloroplast. Its subcellular location is the plastoglobule. The catalysed reaction is L-seryl-[protein] + ATP = O-phospho-L-seryl-[protein] + ADP + H(+). It catalyses the reaction L-threonyl-[protein] + ATP = O-phospho-L-threonyl-[protein] + ADP + H(+). Its function is as follows. Involved in resistance to oxidative stress. Influences responses to reactive oxygen species (ROS) production. Regulates plastoglobules formation in thylakoids. Together with OSA1, regulates iron distribution within the chloroplast and mediates the oxidative stress response. Together with ABC1K8, influences chloroplast lipid synthesis/accumulation and modulates chloroplast membrane composition in response to stress. The chain is Protein ACTIVITY OF BC1 COMPLEX KINASE 7, chloroplastic from Arabidopsis thaliana (Mouse-ear cress).